Reading from the N-terminus, the 161-residue chain is Large ribosomal subunit protein eL21 (161 aa).

The protein belongs to the eukaryotic ribosomal protein eL21 family.

In Cyanophora paradoxa, this protein is Large ribosomal subunit protein eL21 (RPL21).